Here is a 298-residue protein sequence, read N- to C-terminus: Bifunctional protein FolD (298 aa).

NADP(+)-binding positions include 165–167, serine 190, and isoleucine 231; that span reads GRS.

This sequence belongs to the tetrahydrofolate dehydrogenase/cyclohydrolase family. As to quaternary structure, homodimer.

The catalysed reaction is (6R)-5,10-methylene-5,6,7,8-tetrahydrofolate + NADP(+) = (6R)-5,10-methenyltetrahydrofolate + NADPH. It carries out the reaction (6R)-5,10-methenyltetrahydrofolate + H2O = (6R)-10-formyltetrahydrofolate + H(+). The protein operates within one-carbon metabolism; tetrahydrofolate interconversion. In terms of biological role, catalyzes the oxidation of 5,10-methylenetetrahydrofolate to 5,10-methenyltetrahydrofolate and then the hydrolysis of 5,10-methenyltetrahydrofolate to 10-formyltetrahydrofolate. The protein is Bifunctional protein FolD of Prochlorococcus marinus (strain AS9601).